The primary structure comprises 214 residues: Fibroblast growth factor 8 (214 aa).

The signal sequence occupies residues 1–22 (MDPCSSLFSYVFMHLFVLCLQA). N-linked (GlcNAc...) asparagine glycosylation is found at asparagine 31, asparagine 137, and asparagine 207.

The protein belongs to the heparin-binding growth factors family.

It is found in the secreted. Plays an important role in the regulation of embryonic development, cell proliferation, cell differentiation and cell migration. Involved in initiation, outgrowth and patterning of the limbs. The protein is Fibroblast growth factor 8 (FGF8) of Gallus gallus (Chicken).